Consider the following 188-residue polypeptide: Protein SYC1 (188 aa).

Component of the cleavage and polyadenylation factor (CPF) complex, which is composed of at least PTI1, SYC1, SSU72, GLC7, MPE1, REF2, PFS2, PTA1, YSH1/BRR5, SWD2, CFT2/YDH1, YTH1, CFT1/YHH1, FIP1 and PAP1. Component of the APT complex, which is a subcomplex of CPF, and is composed of PTI1, SYC1, SSU72, GLC7, REF2, PTA1 and SWD2.

The protein localises to the nucleus. Its function is as follows. Component of the cleavage and polyadenylation factor (CPF) complex, which plays a key role in polyadenylation-dependent pre-mRNA 3'-end formation and cooperates with cleavage factors including the CFIA complex and NAB4/CFIB. Component of the APT complex, which may be involved in polyadenylation-independent transcript 3'-end formation, including snoRNAs and snRNAs. This is Protein SYC1 (SYC1) from Saccharomyces cerevisiae (strain ATCC 204508 / S288c) (Baker's yeast).